A 370-amino-acid polypeptide reads, in one-letter code: Protein rough sheath 2 (370 aa).

2 HTH myb-type domains span residues 1-53 (MKER…KNYL) and 54-108 (RPGI…EKQQ). DNA-binding regions (H-T-H motif) lie at residues 27–53 (WHLV…KNYL) and 81–104 (WKKI…EVFK). Residues 107–129 (QQRELRDSRRPPPEPSPDERGRY) are disordered. Residues 276 to 340 (KRVEQQLEME…QVKEEKMAEQ (65 aa)) are a coiled coil.

In terms of assembly, homodimer. Interacts with AS2, WRKY1, HIRA, a probable histone chaperone, and RIK, a predicted RNA binding protein. Expressed in lateral organ promordia.

The protein localises to the nucleus. Transcription factor required for normal cell differentiation. Interacts directly with asymmetric leaves 2 (AS2) to repress the knox homeobox genes. In Zea mays (Maize), this protein is Protein rough sheath 2 (RS2).